The chain runs to 448 residues: C4-dicarboxylate transport protein (448 aa).

Helical transmembrane passes span 22–42 (FQVV…PAFA), 55–75 (LVKM…IAGM), 90–110 (TYFL…AHVV), 137–157 (ELSL…SAFV), 159–179 (GNIL…ALVG), 199–219 (LVHM…AFTI), and 232–252 (WLVG…LGIV). The segment at 428–448 (RAPPLQAPVPPPDAVAPVSAR) is disordered. The span at 432–441 (LQAPVPPPDA) shows a compositional bias: pro residues.

The protein belongs to the dicarboxylate/amino acid:cation symporter (DAACS) (TC 2.A.23) family.

It localises to the cell inner membrane. Functionally, responsible for the transport of dicarboxylates such as succinate, fumarate, and malate from the periplasm across the membrane. This chain is C4-dicarboxylate transport protein, found in Xanthomonas campestris pv. campestris (strain 8004).